The sequence spans 155 residues: Putative pre-16S rRNA nuclease (155 aa).

Belongs to the YqgF nuclease family.

Its subcellular location is the cytoplasm. Its function is as follows. Could be a nuclease involved in processing of the 5'-end of pre-16S rRNA. The polypeptide is Putative pre-16S rRNA nuclease (Corynebacterium jeikeium (strain K411)).